A 539-amino-acid polypeptide reads, in one-letter code: Alpha-aminoadipic semialdehyde dehydrogenase (539 aa).

A mitochondrion-targeting transit peptide spans 1–26 (MWRVPRRLCVQSVKTSKLSGPWSRPA). 3 positions are modified to N6-acetyllysine; alternate: lysine 86, lysine 94, and lysine 97. Lysine 86, lysine 94, and lysine 97 each carry N6-succinyllysine; alternate. NAD(+) contacts are provided by residues 192-194 (TAF), lysine 218, 258-259 (GT), 274-275 (GS), 274-279 (GSTQVG), and 296-297 (EL). The active-site Proton acceptor is glutamate 296. The active-site Nucleophile is cysteine 330. Residue threonine 331 coordinates (S)-2-amino-6-oxohexanoate. Glutamate 427 is an NAD(+) binding site. Lysine 462 carries the post-translational modification N6-acetyllysine. (S)-2-amino-6-oxohexanoate is bound by residues glycine 489 and alanine 490. An N6-acetyllysine modification is found at lysine 500. Residue lysine 537 is modified to N6-succinyllysine.

It belongs to the aldehyde dehydrogenase family. Homotetramer. In terms of tissue distribution, present in liver, kidney, brain and pancreas, and at lower levels in jejunum, duodenum, stomach and testes (at protein level).

The protein localises to the cytoplasm. It is found in the cytosol. Its subcellular location is the nucleus. It localises to the mitochondrion. The enzyme catalyses nonanal + NAD(+) + H2O = nonanoate + NADH + 2 H(+). It carries out the reaction (S)-2-amino-6-oxohexanoate + NAD(+) + H2O = L-2-aminoadipate + NADH + 2 H(+). The catalysed reaction is betaine aldehyde + NAD(+) + H2O = glycine betaine + NADH + 2 H(+). It catalyses the reaction an aldehyde + NAD(+) + H2O = a carboxylate + NADH + 2 H(+). The enzyme catalyses hexanal + NAD(+) + H2O = hexanoate + NADH + 2 H(+). It carries out the reaction octanal + NAD(+) + H2O = octanoate + NADH + 2 H(+). The catalysed reaction is (E)-non-2-enal + NAD(+) + H2O = (E)-non-2-enoate + NADH + 2 H(+). It catalyses the reaction (E)-4-hydroxynon-2-enal + NAD(+) + H2O = (E)-4-hydroxynon-2-enoate + NADH + 2 H(+). Its pathway is amine and polyamine biosynthesis; betaine biosynthesis via choline pathway; betaine from betaine aldehyde: step 1/1. Functionally, multifunctional enzyme mediating important protective effects. Metabolizes betaine aldehyde to betaine, an important cellular osmolyte and methyl donor. Protects cells from oxidative stress by metabolizing a number of lipid peroxidation-derived aldehydes. Involved in lysine catabolism. In Mus musculus (Mouse), this protein is Alpha-aminoadipic semialdehyde dehydrogenase.